The following is a 264-amino-acid chain: Small ribosomal subunit protein eS1B (264 aa).

The segment at 233–264 is disordered; the sequence is GEGGGSGKPAADETGAKVERADGYEPPVQESV. A compositionally biased stretch (basic and acidic residues) spans 242–255; it reads AADETGAKVERADG.

The protein belongs to the eukaryotic ribosomal protein eS1 family. Component of the small ribosomal subunit. Mature ribosomes consist of a small (40S) and a large (60S) subunit. The 40S subunit contains about 33 different proteins and 1 molecule of RNA (18S). The 60S subunit contains about 49 different proteins and 3 molecules of RNA (28S, 5.8S and 5S). Part of the small subunit (SSU) processome, composed of more than 70 proteins and the RNA chaperone small nucleolar RNA (snoRNA) U3.

It localises to the cytoplasm. Its subcellular location is the nucleus. The protein resides in the nucleolus. Functionally, component of the small ribosomal subunit. The ribosome is a large ribonucleoprotein complex responsible for the synthesis of proteins in the cell. Part of the small subunit (SSU) processome, first precursor of the small eukaryotic ribosomal subunit. During the assembly of the SSU processome in the nucleolus, many ribosome biogenesis factors, an RNA chaperone and ribosomal proteins associate with the nascent pre-rRNA and work in concert to generate RNA folding, modifications, rearrangements and cleavage as well as targeted degradation of pre-ribosomal RNA by the RNA exosome. May play a role during erythropoiesis. The protein is Small ribosomal subunit protein eS1B (rps3a-b) of Xenopus laevis (African clawed frog).